A 147-amino-acid chain; its full sequence is Spermidine export protein MdtJ (147 aa).

Transmembrane regions (helical) follow at residues 1-21 (MIYW…TLSM), 31-51 (TGHV…SLAV), 54-74 (VALG…ITIF), and 81-101 (ETLS…ILLV). Positions 105-117 (TRKPKQPNRHRGN) are enriched in basic residues. A disordered region spans residues 105–147 (TRKPKQPNRHRGNRPPSVQGLKTQTTGHHKGVAVESGEHHAAA).

It belongs to the drug/metabolite transporter (DMT) superfamily. Small multidrug resistance (SMR) (TC 2.A.7.1) family. MdtJ subfamily. As to quaternary structure, forms a complex with MdtI.

It is found in the cell inner membrane. Its function is as follows. Catalyzes the excretion of spermidine. The sequence is that of Spermidine export protein MdtJ from Yersinia pseudotuberculosis serotype IB (strain PB1/+).